The sequence spans 338 residues: Ketol-acid reductoisomerase (NADP(+)) (338 aa).

The region spanning 1–181 is the KARI N-terminal Rossmann domain; sequence MNVYYDKDCD…GGGRSGIIET (181 aa). Residues 24–27, R47, S50, S52, and 82–85 contribute to the NADP(+) site; these read YGSQ and DEFQ. The active site involves H107. Position 133 (G133) interacts with NADP(+). Residues 182 to 327 form the KARI C-terminal knotted domain; sequence TFKDETETDL…AKLRGMMPWI (146 aa). Mg(2+) contacts are provided by D190, E194, E226, and E230. S251 contributes to the substrate binding site.

Belongs to the ketol-acid reductoisomerase family. It depends on Mg(2+) as a cofactor.

The catalysed reaction is (2R)-2,3-dihydroxy-3-methylbutanoate + NADP(+) = (2S)-2-acetolactate + NADPH + H(+). It catalyses the reaction (2R,3R)-2,3-dihydroxy-3-methylpentanoate + NADP(+) = (S)-2-ethyl-2-hydroxy-3-oxobutanoate + NADPH + H(+). The protein operates within amino-acid biosynthesis; L-isoleucine biosynthesis; L-isoleucine from 2-oxobutanoate: step 2/4. Its pathway is amino-acid biosynthesis; L-valine biosynthesis; L-valine from pyruvate: step 2/4. Involved in the biosynthesis of branched-chain amino acids (BCAA). Catalyzes an alkyl-migration followed by a ketol-acid reduction of (S)-2-acetolactate (S2AL) to yield (R)-2,3-dihydroxy-isovalerate. In the isomerase reaction, S2AL is rearranged via a Mg-dependent methyl migration to produce 3-hydroxy-3-methyl-2-ketobutyrate (HMKB). In the reductase reaction, this 2-ketoacid undergoes a metal-dependent reduction by NADPH to yield (R)-2,3-dihydroxy-isovalerate. This chain is Ketol-acid reductoisomerase (NADP(+)), found in Psychrobacter arcticus (strain DSM 17307 / VKM B-2377 / 273-4).